Here is a 535-residue protein sequence, read N- to C-terminus: uncharacterized protein (535 aa).

The chain crosses the membrane as a helical span at residues 8–24 (LVVFGSLVFFFGLVKYF). Lys-50 participates in a covalent cross-link: Glycyl lysine isopeptide (Lys-Gly) (interchain with G-Cter in ubiquitin). Mn(2+) contacts are provided by Asp-316, Asp-327, His-412, Glu-452, and Glu-493.

It belongs to the peptidase M24B family. Mn(2+) is required as a cofactor.

It localises to the membrane. This is an uncharacterized protein from Saccharomyces cerevisiae (strain ATCC 204508 / S288c) (Baker's yeast).